Here is a 594-residue protein sequence, read N- to C-terminus: (-)-endo-fenchol synthase, chloroplastic (594 aa).

The N-terminal 50 residues, 1–50, are a transit peptide targeting the chloroplast; that stretch reads MSSLVMHVGIVNKPAITYLPTLSRSASNLHNVSSTRLQTSCSLQLDYKPV. Residues Asp348, Asp352, Asp492, and Glu500 each coordinate Mg(2+). A DDXXD motif motif is present at residues 348–352; that stretch reads DDIYD.

It belongs to the terpene synthase family. Tpsa subfamily. It depends on Mg(2+) as a cofactor. The cofactor is Mn(2+). As to expression, expressed at high levels in leaves.

The protein resides in the plastid. Its subcellular location is the chloroplast. The enzyme catalyses (2E)-geranyl diphosphate = alpha-pinene + diphosphate. The catalysed reaction is (2E)-geranyl diphosphate + H2O = (1S,2S,4R)-endo-fenchol + diphosphate. It catalyses the reaction (2E)-geranyl diphosphate = limonene + diphosphate. The protein operates within secondary metabolite biosynthesis; terpenoid biosynthesis. Its function is as follows. Monoterpene synthase involved in the biosynthesis of volatile compounds widely used in aromatherapy and folk medicine, and present in culinary herbs. Mediates the conversion of (2E)-geranyl diphosphate (GPP) into alpha fenchol, limonene and alpha-pinene and, as minor compounds, into beta-myrcene, alpha-terpinolene and alpha-phellandrene. The chain is (-)-endo-fenchol synthase, chloroplastic from Lavandula pedunculata subsp. lusitanica (French lavender).